The following is a 470-amino-acid chain: Nuclear receptor ROR-beta (470 aa).

The nuclear receptor DNA-binding region spans 18-93 (VIPCKICGDK…LGMSRDAVKF (76 aa)). NR C4-type zinc fingers lie at residues 21 to 41 (CKIC…CEGC) and 57 to 81 (CPRQ…LQKC). Basic and acidic residues predominate over residues 104 to 117 (LYAEVQKHQQRLQE). Positions 104–127 (LYAEVQKHQQRLQEQRQQQSGEAE) are disordered. Residues 222-460 (EIDRIAQNII…TLFPPLYKEL (239 aa)) enclose the NR LBD domain. An AF-2 motif is present at residues 456-461 (LYKELF).

It belongs to the nuclear hormone receptor family. NR1 subfamily. In terms of assembly, monomer. Interacts with CRX. Expressed in inner and outer neuroblastic layer as well as in the ganglion cell layer of the developing retina. Expressed in bone marrow osteoprogenitor cells.

It is found in the nucleus. It localises to the nucleoplasm. Nuclear receptor that binds DNA as a monomer to ROR response elements (RORE) containing a single core motif half-site 5'-AGGTCA-3' preceded by a short A-T-rich sequence. Considered to have intrinsic transcriptional activity, have some natural ligands such as all-trans retinoic acid (ATRA) and other retinoids which act as inverse agonists repressing the transcriptional activity. Required for normal postnatal development of rod and cone photoreceptor cells. Modulates rod photoreceptors differentiation at least by inducing the transcription factor NRL-mediated pathway. In cone photoreceptor cells, regulates transcription of OPN1SW. Involved in the regulation of the period length and stability of the circadian rhythm. May control cytoarchitectural patterning of neocortical neurons during development. May act in a dose-dependent manner to regulate barrel formation upon innervation of layer IV neurons by thalamocortical axons. May play a role in the suppression of osteoblastic differentiation through the inhibition of RUNX2 transcriptional activity. Functionally, isoform 1 is critical for hindlimb motor control and for the differentiation of amacrine and horizontal cells in the retina. Regulates the expression of PTF1A synergistically with FOXN4. The protein is Nuclear receptor ROR-beta (Rorb) of Mus musculus (Mouse).